A 187-amino-acid polypeptide reads, in one-letter code: Elongation factor P (187 aa).

This sequence belongs to the elongation factor P family.

Its subcellular location is the cytoplasm. Its pathway is protein biosynthesis; polypeptide chain elongation. In terms of biological role, involved in peptide bond synthesis. Stimulates efficient translation and peptide-bond synthesis on native or reconstituted 70S ribosomes in vitro. Probably functions indirectly by altering the affinity of the ribosome for aminoacyl-tRNA, thus increasing their reactivity as acceptors for peptidyl transferase. The sequence is that of Elongation factor P from Thermodesulfovibrio yellowstonii (strain ATCC 51303 / DSM 11347 / YP87).